A 148-amino-acid polypeptide reads, in one-letter code: uncharacterized protein (148 aa).

This sequence belongs to the SufE family.

This is an uncharacterized protein from Rhizobium etli (strain ATCC 51251 / DSM 11541 / JCM 21823 / NBRC 15573 / CFN 42).